We begin with the raw amino-acid sequence, 337 residues long: MQIVEQMKDKALAELNLVKDKKTLDDIRVKYLGKKGELTEMMKLIATLPNDEKPKLGQAVNIAKQALQEAINLKLANFEEQELNEKLAQEKIDITLSGVGQNQGSLHPVTKTLNRIEAFFKQNGFAIEFGPEIESDYYNFETLNIPSHHPARAMHDTFYIDETHVLRTHTSGVQIRTMEKQQPPIRIIAPGRVYRCDSDITHTPMFHQVEGLLVDKDVSFADLKGLLHAFLNSFFEKDLKVRFRPSYFPFTEPSAEADIECVMCDGKGCRVCKHTGWLEVLGCGMVHPKVLKAGNVDPEKYQGFAFGMGVERLSMLRYGIDDLRMFFENDLRFLKQF.

Glutamate 252 contributes to the Mg(2+) binding site.

The protein belongs to the class-II aminoacyl-tRNA synthetase family. Phe-tRNA synthetase alpha subunit type 1 subfamily. As to quaternary structure, tetramer of two alpha and two beta subunits. The cofactor is Mg(2+).

It localises to the cytoplasm. The enzyme catalyses tRNA(Phe) + L-phenylalanine + ATP = L-phenylalanyl-tRNA(Phe) + AMP + diphosphate + H(+). The chain is Phenylalanine--tRNA ligase alpha subunit from Francisella tularensis subsp. novicida (strain U112).